The following is a 344-amino-acid chain: MSNPILLGIFWHFIGAASAACFYAPFKQVKNWSWETMWSLGGFFSWIILPWSISWWLLPDFWRYYGSFDMATLLPIFLFGAMWGIGNINYGLTMRYLGMSMGIGIAIGVTLIIGTLMTPVLQGKFSVLFGSPGGQMTLLGVLVAVIGVAIVSYAGLLKERALGIRAEEFSLKKGLILAVMCGIFSAGMSFAMDAAKPMHTAAQALGINSLYVALPSYVVIMGGGAIVNLGFCFIRLATCKGISLKADLAQAKPLLIANALFAILGGVMWYLQFFFYAWGHANIPADYTYISWMLHMSFYVLCGGIVGLLFKEWKAVGQKPVRMLVLGCVVIILAANIVGLGMAV.

The next 10 membrane-spanning stretches (helical) occupy residues 4–24 (PILLGIFWHFIGAASAACFYA), 38–58 (WSLGGFFSWIILPWSISWWLL), 68–88 (FDMATLLPIFLFGAMWGIGNI), 101–121 (MGIGIAIGVTLIIGTLMTPVL), 137–157 (TLLGVLVAVIGVAIVSYAGLL), 175–195 (LILAVMCGIFSAGMSFAMDAA), 214–234 (LPSYVVIMGGGAIVNLGFCFI), 255–275 (LIANALFAILGGVMWYLQFFF), 290–310 (ISWMLHMSFYVLCGGIVGLLF), and 324–344 (LVLGCVVIILAANIVGLGMAV).

It belongs to the L-rhamnose transporter (TC 2.A.7.6) family.

It localises to the cell inner membrane. The enzyme catalyses L-rhamnopyranose(in) + H(+)(in) = L-rhamnopyranose(out) + H(+)(out). In terms of biological role, uptake of L-rhamnose across the cytoplasmic membrane with the concomitant transport of protons into the cell (symport system). The polypeptide is L-rhamnose-proton symporter (Pectobacterium atrosepticum (strain SCRI 1043 / ATCC BAA-672) (Erwinia carotovora subsp. atroseptica)).